We begin with the raw amino-acid sequence, 243 residues long: tRNA (guanine-N(1)-)-methyltransferase (243 aa).

S-adenosyl-L-methionine-binding positions include Gly110 and 130–135 (VGDYVM).

It belongs to the RNA methyltransferase TrmD family. In terms of assembly, homodimer.

The protein resides in the cytoplasm. The enzyme catalyses guanosine(37) in tRNA + S-adenosyl-L-methionine = N(1)-methylguanosine(37) in tRNA + S-adenosyl-L-homocysteine + H(+). Its function is as follows. Specifically methylates guanosine-37 in various tRNAs. In Treponema denticola (strain ATCC 35405 / DSM 14222 / CIP 103919 / JCM 8153 / KCTC 15104), this protein is tRNA (guanine-N(1)-)-methyltransferase.